The primary structure comprises 315 residues: tRNA dimethylallyltransferase (315 aa).

ATP is bound at residue glycine 10–threonine 17. Threonine 12–threonine 17 lines the substrate pocket. An interaction with substrate tRNA region spans residues aspartate 35–glutamine 38.

This sequence belongs to the IPP transferase family. As to quaternary structure, monomer. Mg(2+) is required as a cofactor.

It carries out the reaction adenosine(37) in tRNA + dimethylallyl diphosphate = N(6)-dimethylallyladenosine(37) in tRNA + diphosphate. Its function is as follows. Catalyzes the transfer of a dimethylallyl group onto the adenine at position 37 in tRNAs that read codons beginning with uridine, leading to the formation of N6-(dimethylallyl)adenosine (i(6)A). The polypeptide is tRNA dimethylallyltransferase (Thermodesulfovibrio yellowstonii (strain ATCC 51303 / DSM 11347 / YP87)).